The primary structure comprises 383 residues: 8-amino-7-oxononanoate synthase (383 aa).

Substrate is bound at residue arginine 21. A pyridoxal 5'-phosphate-binding site is contributed by 108-109 (GY). Substrate is bound at residue histidine 133. The pyridoxal 5'-phosphate site is built by serine 179, histidine 207, and threonine 233. Position 236 is an N6-(pyridoxal phosphate)lysine (lysine 236). A substrate-binding site is contributed by threonine 350.

The protein belongs to the class-II pyridoxal-phosphate-dependent aminotransferase family. BioF subfamily. In terms of assembly, homodimer. Requires pyridoxal 5'-phosphate as cofactor.

It carries out the reaction 6-carboxyhexanoyl-[ACP] + L-alanine + H(+) = (8S)-8-amino-7-oxononanoate + holo-[ACP] + CO2. Its pathway is cofactor biosynthesis; biotin biosynthesis. In terms of biological role, catalyzes the decarboxylative condensation of pimeloyl-[acyl-carrier protein] and L-alanine to produce 8-amino-7-oxononanoate (AON), [acyl-carrier protein], and carbon dioxide. In Serratia proteamaculans (strain 568), this protein is 8-amino-7-oxononanoate synthase.